The sequence spans 350 residues: Biotin synthase (350 aa).

A Radical SAM core domain is found at 38 to 256 (NYVQVSTLLS…IAVARIMMPE (219 aa)). Cys53, Cys57, and Cys60 together coordinate [4Fe-4S] cluster. [2Fe-2S] cluster is bound by residues Cys97, Cys128, Cys188, and Arg260.

This sequence belongs to the radical SAM superfamily. Biotin synthase family. As to quaternary structure, homodimer. [4Fe-4S] cluster serves as cofactor. Requires [2Fe-2S] cluster as cofactor.

It carries out the reaction (4R,5S)-dethiobiotin + (sulfur carrier)-SH + 2 reduced [2Fe-2S]-[ferredoxin] + 2 S-adenosyl-L-methionine = (sulfur carrier)-H + biotin + 2 5'-deoxyadenosine + 2 L-methionine + 2 oxidized [2Fe-2S]-[ferredoxin]. Its pathway is cofactor biosynthesis; biotin biosynthesis; biotin from 7,8-diaminononanoate: step 2/2. In terms of biological role, catalyzes the conversion of dethiobiotin (DTB) to biotin by the insertion of a sulfur atom into dethiobiotin via a radical-based mechanism. This chain is Biotin synthase, found in Aliivibrio salmonicida (strain LFI1238) (Vibrio salmonicida (strain LFI1238)).